The following is a 368-amino-acid chain: CCA-adding enzyme (368 aa).

ATP-binding residues include glycine 8 and arginine 11. Residues glycine 8 and arginine 11 each coordinate CTP. Aspartate 21 and aspartate 23 together coordinate Mg(2+). The ATP site is built by arginine 91, arginine 137, and arginine 140. CTP-binding residues include arginine 91, arginine 137, and arginine 140.

The protein belongs to the tRNA nucleotidyltransferase/poly(A) polymerase family. Bacterial CCA-adding enzyme type 2 subfamily. The cofactor is Mg(2+).

The catalysed reaction is a tRNA precursor + 2 CTP + ATP = a tRNA with a 3' CCA end + 3 diphosphate. It carries out the reaction a tRNA with a 3' CCA end + 2 CTP + ATP = a tRNA with a 3' CCACCA end + 3 diphosphate. In terms of biological role, catalyzes the addition and repair of the essential 3'-terminal CCA sequence in tRNAs without using a nucleic acid template. Adds these three nucleotides in the order of C, C, and A to the tRNA nucleotide-73, using CTP and ATP as substrates and producing inorganic pyrophosphate. tRNA 3'-terminal CCA addition is required both for tRNA processing and repair. Also involved in tRNA surveillance by mediating tandem CCA addition to generate a CCACCA at the 3' terminus of unstable tRNAs. While stable tRNAs receive only 3'-terminal CCA, unstable tRNAs are marked with CCACCA and rapidly degraded. The polypeptide is CCA-adding enzyme (Pseudomonas putida (strain ATCC 700007 / DSM 6899 / JCM 31910 / BCRC 17059 / LMG 24140 / F1)).